We begin with the raw amino-acid sequence, 167 residues long: ATP synthase subunit b (167 aa).

The helical transmembrane segment at 8-28 (AEAEFWVGAGLLIFLGIVFFG) threads the bilayer.

The protein belongs to the ATPase B chain family. In terms of assembly, F-type ATPases have 2 components, F(1) - the catalytic core - and F(0) - the membrane proton channel. F(1) has five subunits: alpha(3), beta(3), gamma(1), delta(1), epsilon(1). F(0) has three main subunits: a(1), b(2) and c(10-14). The alpha and beta chains form an alternating ring which encloses part of the gamma chain. F(1) is attached to F(0) by a central stalk formed by the gamma and epsilon chains, while a peripheral stalk is formed by the delta and b chains.

The protein localises to the cell inner membrane. F(1)F(0) ATP synthase produces ATP from ADP in the presence of a proton or sodium gradient. F-type ATPases consist of two structural domains, F(1) containing the extramembraneous catalytic core and F(0) containing the membrane proton channel, linked together by a central stalk and a peripheral stalk. During catalysis, ATP synthesis in the catalytic domain of F(1) is coupled via a rotary mechanism of the central stalk subunits to proton translocation. Functionally, component of the F(0) channel, it forms part of the peripheral stalk, linking F(1) to F(0). The chain is ATP synthase subunit b from Phenylobacterium zucineum (strain HLK1).